We begin with the raw amino-acid sequence, 479 residues long: Adenosylhomocysteinase (479 aa).

The substrate site is built by T56, D134, and E200. 201-203 contacts NAD(+); sequence TTT. Substrate contacts are provided by K230 and D234. NAD(+)-binding positions include N235, 264–269, E287, N322, 343–345, and N391; these read GYGDVG and IGH.

It belongs to the adenosylhomocysteinase family. As to quaternary structure, homotetramer. NAD(+) is required as a cofactor.

It carries out the reaction S-adenosyl-L-homocysteine + H2O = L-homocysteine + adenosine. Its pathway is amino-acid biosynthesis; L-homocysteine biosynthesis; L-homocysteine from S-adenosyl-L-homocysteine: step 1/1. Functionally, adenosylhomocysteine is a competitive inhibitor of S-adenosyl-L-methionine-dependent methyl transferase reactions; therefore adenosylhomocysteinase may play a key role in the control of methylations via regulation of the intracellular concentration of adenosylhomocysteine. The polypeptide is Adenosylhomocysteinase (Plasmodium falciparum (isolate 3D7)).